Consider the following 932-residue polypeptide: 2-oxoglutarate dehydrogenase E1 component (932 aa).

It belongs to the alpha-ketoglutarate dehydrogenase family. In terms of assembly, homodimer. Part of the 2-oxoglutarate dehydrogenase (OGDH) complex composed of E1 (2-oxoglutarate dehydrogenase), E2 (dihydrolipoamide succinyltransferase) and E3 (dihydrolipoamide dehydrogenase); the complex contains multiple copies of the three enzymatic components (E1, E2 and E3). Requires thiamine diphosphate as cofactor.

It carries out the reaction N(6)-[(R)-lipoyl]-L-lysyl-[protein] + 2-oxoglutarate + H(+) = N(6)-[(R)-S(8)-succinyldihydrolipoyl]-L-lysyl-[protein] + CO2. Functionally, E1 component of the 2-oxoglutarate dehydrogenase (OGDH) complex which catalyzes the decarboxylation of 2-oxoglutarate, the first step in the conversion of 2-oxoglutarate to succinyl-CoA and CO(2). This Staphylococcus aureus (strain MW2) protein is 2-oxoglutarate dehydrogenase E1 component.